The chain runs to 106 residues: Protein Rev (106 aa).

The homomultimerization stretch occupies residues 8-16 (LIKFLYQSN). The segment at 14–39 (QSNPPPKPEGTRQARRNRRRRWRERQ) is disordered. The short motif at 24 to 40 (TRQARRNRRRRWRERQR) is the Nuclear localization signal and RNA-binding (RRE) element. Basic residues predominate over residues 26 to 37 (QARRNRRRRWRE). Positions 63–74 (LQLPPLERLTLD) match the Nuclear export signal and binding to XPO1 motif. Residues S82 and S89 each carry the phosphoserine; by host modification. The tract at residues 82–106 (SGTQGVGSPQILVESPTVLESGTKE) is disordered.

It belongs to the HIV-1 REV protein family. In terms of assembly, homomultimer; when bound to the RRE. Multimeric assembly is essential for activity and may involve XPO1. Binds to human KPNB1, XPO1, TNPO1, RANBP5 and IPO7. Interacts with the viral Integrase. Interacts with human KHDRBS1. Interacts with human NAP1; this interaction decreases Rev multimerization and stimulates its activity. Interacts with human DEAD-box helicases DDX3 and DDX24; these interactions may serve for viral RNA export to the cytoplasm and packaging, respectively. Interacts with human PSIP1; this interaction may inhibit HIV-1 DNA integration by promoting dissociation of the Integrase-LEDGF/p75 complex. Post-translationally, asymmetrically arginine dimethylated at one site by host PRMT6. Methylation impairs the RNA-binding activity and export of viral RNA from the nucleus to the cytoplasm. In terms of processing, phosphorylated by protein kinase CK2. Presence of, and maybe binding to the N-terminus of the regulatory beta subunit of CK2 is necessary for CK2-mediated Rev's phosphorylation.

It localises to the host nucleus. The protein localises to the host nucleolus. It is found in the host cytoplasm. In terms of biological role, escorts unspliced or incompletely spliced viral pre-mRNAs (late transcripts) out of the nucleus of infected cells. These pre-mRNAs carry a recognition sequence called Rev responsive element (RRE) located in the env gene, that is not present in fully spliced viral mRNAs (early transcripts). This function is essential since most viral proteins are translated from unspliced or partially spliced pre-mRNAs which cannot exit the nucleus by the pathway used by fully processed cellular mRNAs. Rev itself is translated from a fully spliced mRNA that readily exits the nucleus. Rev's nuclear localization signal (NLS) binds directly to KPNB1/Importin beta-1 without previous binding to KPNA1/Importin alpha-1. KPNB1 binds to the GDP bound form of RAN (Ran-GDP) and targets Rev to the nucleus. In the nucleus, the conversion from Ran-GDP to Ran-GTP dissociates Rev from KPNB1 and allows Rev's binding to the RRE in viral pre-mRNAs. Rev multimerization on the RRE via cooperative assembly exposes its nuclear export signal (NES) to the surface. Rev can then form a complex with XPO1/CRM1 and Ran-GTP, leading to nuclear export of the complex. Conversion from Ran-GTP to Ran-GDP mediates dissociation of the Rev/RRE/XPO1/RAN complex, so that Rev can return to the nucleus for a subsequent round of export. Beside KPNB1, also seems to interact with TNPO1/Transportin-1, RANBP5/IPO5 and IPO7/RANBP7 for nuclear import. The nucleoporin-like HRB/RIP is an essential cofactor that probably indirectly interacts with Rev to release HIV RNAs from the perinuclear region to the cytoplasm. The protein is Protein Rev of Homo sapiens (Human).